The primary structure comprises 334 residues: 3-ketodihydrosphingosine reductase (334 aa).

The N-terminal stretch at 1 to 20 (MIIYILFSLLAAVIVHLVYK) is a signal peptide. NADPH-binding residues include G36, S38, S39, G40, R62, K66, D100, and I101. The GXSXG signature appears at 36 to 40 (GGSSG). S182 functions as the Proton donor in the catalytic mechanism. Y196 functions as the Proton acceptor in the catalytic mechanism. NADP(+) contacts are provided by Y196 and K200. K200 functions as the Lowers pKa of active site Tyr in the catalytic mechanism.

It belongs to the short-chain dehydrogenases/reductases (SDR) family.

The protein resides in the endoplasmic reticulum. The catalysed reaction is sphinganine + NADP(+) = 3-oxosphinganine + NADPH + H(+). The protein operates within lipid metabolism; sphingolipid metabolism. Its function is as follows. Catalyzes the reduction of 3'-oxosphinganine (3-ketodihydrosphingosine/KDS) to sphinganine (dihydrosphingosine/DHS), the second step of de novo sphingolipid biosynthesis. This Dictyostelium discoideum (Social amoeba) protein is 3-ketodihydrosphingosine reductase (ksrA-1).